Reading from the N-terminus, the 559-residue chain is Probable D-2-hydroxyglutarate dehydrogenase, mitochondrial (559 aa).

Residues 1–80 (MARRAAAGLL…MNFEVQKRSF (80 aa)) constitute a mitochondrion transit peptide. The 180-residue stretch at 131-310 (YKGSSQLLLL…TKIAILTPAK (180 aa)) folds into the FAD-binding PCMH-type domain.

The protein belongs to the FAD-binding oxidoreductase/transferase type 4 family. As to quaternary structure, homodimer. FAD is required as a cofactor.

Its subcellular location is the mitochondrion. The catalysed reaction is (R)-2-hydroxyglutarate + A = 2-oxoglutarate + AH2. Its function is as follows. Catalyzes the oxidation of D-2-hydroxyglutarate to alpha-ketoglutarate. The protein is Probable D-2-hydroxyglutarate dehydrogenase, mitochondrial (D2HGDH) of Oryza sativa subsp. indica (Rice).